Here is a 390-residue protein sequence, read N- to C-terminus: GTPase Obg (390 aa).

One can recognise an Obg domain in the interval 1-159 (MKFVDEATIL…RELMLELLLL (159 aa)). The region spanning 160-333 (ADVGMLGLPN…LCWDVMNFLN (174 aa)) is the OBG-type G domain. GTP is bound by residues 166–173 (GLPNAGKS), 191–195 (FTTLI), 213–216 (DIPG), 283–286 (NKID), and 314–316 (SAA). 2 residues coordinate Mg(2+): serine 173 and threonine 193. Residues 363-384 (EVEAEAESEDDDDWDEEDDDGV) are compositionally biased toward acidic residues. The tract at residues 363–390 (EVEAEAESEDDDDWDEEDDDGVEFIYER) is disordered.

It belongs to the TRAFAC class OBG-HflX-like GTPase superfamily. OBG GTPase family. In terms of assembly, monomer. It depends on Mg(2+) as a cofactor.

The protein resides in the cytoplasm. Functionally, an essential GTPase which binds GTP, GDP and possibly (p)ppGpp with moderate affinity, with high nucleotide exchange rates and a fairly low GTP hydrolysis rate. Plays a role in control of the cell cycle, stress response, ribosome biogenesis and in those bacteria that undergo differentiation, in morphogenesis control. The sequence is that of GTPase Obg from Yersinia enterocolitica serotype O:8 / biotype 1B (strain NCTC 13174 / 8081).